The primary structure comprises 400 residues: Argininosuccinate synthase (400 aa).

9–17 (AYSGGLDTS) is an ATP binding site. Tyr-87 is an L-citrulline binding site. Gly-117 provides a ligand contact to ATP. Residues Thr-119, Asn-123, and Asp-124 each coordinate L-aspartate. Asn-123 lines the L-citrulline pocket. 5 residues coordinate L-citrulline: Arg-127, Ser-176, Ser-185, Glu-261, and Tyr-273.

This sequence belongs to the argininosuccinate synthase family. Type 1 subfamily. In terms of assembly, homotetramer.

The protein localises to the cytoplasm. It carries out the reaction L-citrulline + L-aspartate + ATP = 2-(N(omega)-L-arginino)succinate + AMP + diphosphate + H(+). The protein operates within amino-acid biosynthesis; L-arginine biosynthesis; L-arginine from L-ornithine and carbamoyl phosphate: step 2/3. The sequence is that of Argininosuccinate synthase from Chlorobium phaeobacteroides (strain DSM 266 / SMG 266 / 2430).